The primary structure comprises 320 residues: Malate dehydrogenase (320 aa).

NAD(+) contacts are provided by residues 10-15 (GSGMIG) and D34. Positions 83 and 89 each coordinate substrate. Residues N96 and 119-121 (ITN) contribute to the NAD(+) site. Substrate is bound by residues N121 and R152. H176 functions as the Proton acceptor in the catalytic mechanism.

It belongs to the LDH/MDH superfamily. MDH type 3 family.

The catalysed reaction is (S)-malate + NAD(+) = oxaloacetate + NADH + H(+). Catalyzes the reversible oxidation of malate to oxaloacetate. This chain is Malate dehydrogenase, found in Brucella melitensis biotype 1 (strain ATCC 23456 / CCUG 17765 / NCTC 10094 / 16M).